The primary structure comprises 174 residues: uncharacterized protein (174 aa).

This is an uncharacterized protein from Dictyostelium discoideum (Social amoeba).